A 452-amino-acid polypeptide reads, in one-letter code: Solute carrier family 52, riboflavin transporter, member 3-B (452 aa).

5 helical membrane passes run 11–31, 38–58, 73–93, 111–131, and 138–158; these read LFGI…PLIV, WLLP…PLFI, PVIY…AFLW, LSFL…PFMM, and LTTY…VALV. 4 N-linked (GlcNAc...) asparagine glycosylation sites follow: Asn168, Asn174, Asn179, and Asn193. Transmembrane regions (helical) follow at residues 199 to 219, 285 to 305, 321 to 341, 344 to 364, 381 to 401, and 412 to 432; these read FFLF…LLNL, VFIF…LPSV, AATL…FVPI, LVLM…IMAM, ALIV…KVII, and ALVW…LSMF.

The protein belongs to the riboflavin transporter family.

The protein localises to the cell membrane. It carries out the reaction riboflavin(in) = riboflavin(out). Plasma membrane transporter mediating the uptake by cells of the water soluble vitamin B2/riboflavin that plays a key role in biochemical oxidation-reduction reactions of the carbohydrate, lipid, and amino acid metabolism. The chain is Solute carrier family 52, riboflavin transporter, member 3-B (slc52a3b) from Danio rerio (Zebrafish).